The primary structure comprises 157 residues: Small ribosomal subunit protein uS7 (157 aa).

This sequence belongs to the universal ribosomal protein uS7 family. In terms of assembly, part of the 30S ribosomal subunit. Contacts proteins S9 and S11.

Functionally, one of the primary rRNA binding proteins, it binds directly to 16S rRNA where it nucleates assembly of the head domain of the 30S subunit. Is located at the subunit interface close to the decoding center, probably blocks exit of the E-site tRNA. This is Small ribosomal subunit protein uS7 from Chloroflexus aggregans (strain MD-66 / DSM 9485).